The chain runs to 408 residues: CinA-like protein (408 aa).

The protein belongs to the CinA family.

The polypeptide is CinA-like protein (Thermotoga neapolitana (strain ATCC 49049 / DSM 4359 / NBRC 107923 / NS-E)).